The primary structure comprises 870 residues: Dynamin-2 (870 aa).

The region spanning 28-294 is the Dynamin-type G domain; sequence HLDLPQIAVV…LTNHIRESLP (267 aa). The segment at 38–45 is G1 motif; that stretch reads GGQSAGKS. The GDP site is built by Ser41, Gly43, Lys44, Ser45, Ser46, Arg59, and Gly60. A G2 motif region spans residues 64-66; that stretch reads VTR. The tract at residues 136-139 is G3 motif; it reads DLPG. Residues 205 to 208 are G4 motif; sequence TKLD. GDP-binding residues include Lys206, Asp208, and Asp211. Tyr231 carries the phosphotyrosine modification. Residues 235 to 238 form a G5 motif region; sequence VNRS. GDP is bound by residues Asn236, Arg237, and Gln239. Lys299 bears the N6-acetyllysine mark. The 107-residue stretch at 519 to 625 folds into the PH domain; it reads LVIRRGWLTI…WKASFLRAGV (107 aa). Tyr597 carries the post-translational modification Phosphotyrosine. The residue at position 598 (Lys598) is an N6-acetyllysine. Residues 653–744 enclose the GED domain; that stretch reads VETIRNLVDS…IIGDISTSTV (92 aa). Residues 741-870 are disordered; that stretch reads TSTVSTPVPP…IRPAEPSLLD (130 aa). A Phosphothreonine modification is found at Thr755. Residues 756-767 show a composition bias toward polar residues; the sequence is WLQNTSSHSPTP. Residue Ser764 is modified to Phosphoserine; by CDK1. Pro residues predominate over residues 826-846; sequence SAPPQIPSRPARIPPGIPPGV. Positions 847 to 864 are enriched in low complexity; that stretch reads PSRRAPAAPSRPTIIRPA.

It belongs to the TRAFAC class dynamin-like GTPase superfamily. Dynamin/Fzo/YdjA family. In terms of assembly, oligomerizes into a helical polymer that self-assembles around the vesicle membrane, when associated to the menbrane through lipid binding. Interacts with SHANK1 and SHANK2. Interacts with SNX9. Interacts (via C-terminal proline-rich domain (PRD)) with SNX18 (via SH3 domain); this interaction regulates ATG9A and ATG16L1 trafficking from recycling endosomes to sites of autophagosome formation. Interacts with SNX33 (via SH3 domain). Interacts with PSTPIP1 (via SH3 domain). Interacts with CTNND2. Interacts (via C-terminal proline-rich domain (PRD)) with BIN1 (via SH3 domain); this interaction allows the recruitment of DNM2 to the membrane tubules and inhibits self-assembly-stimulated GTPase activity on the membrane. Interacts with GABARAP, GABARAPL1 and GABARAPL2. Interacts with MAP1LC3B (the lipidate and non-lipidated LC3 form); this interaction mediates recycling endosome scission leading to autophagosome release. Interacts with ITSN1. Interacts with MYOF. May interact with PIK3C3. May be a component of a complex composed of RAB5A (in GDP-bound form), DYN2 and PIK3C3. Interacts with SDC4; this interaction is markedly enhanced at focal ahesion site upon induction of focal adhesions and stress-fiber formation. Interacts with ACTN1. Interacts with CTTN; this interaction stimulates the intrinsic GTPase activity of DNM2 and stabilizes the association of DNM2 and actin filaments; in addition this interaction is stimulated by ligand binding to the receptor, leading to the recruitment of the DNM2-CTTN complex to the sequestered receptor-ligand complex to its internalization. Interacts with NOSTRIN (via SH3 domain); this interaction allows the recruitment of NOS3 to dynamin-positive structures. Interacts (via C-terminal proline-rich domain (PRD)) with SH3BP4 (via SH3 domain); this interaction controls the GTPase activity and is prevented by EGFR-induced tyrosine phosphorylation of either DNM2 or SH3BP4. Interacts with MYO1E (via SH3 domain). Interacts with TUBG1; this interaction may participate in centrosome cohesion. Post-translationally, phosphorylation at Ser-848 by GSK3-alpha relieves the inhibition of BIN1 and promotes endocytosis. Phosphorylation at Ser-764 by CDK1 is greatly increased upon mitotic entry. It regulates cytokinesis downstream of calcineurin, and does not affect clathrin-mediated endocytosis. Dephosphorylated by calcineurin/PP2 during cytokinesis in a Ca(2+)- and calmodulin-dependent manner. Phosphorylated on tyrosine residues by EGFR. Phosphorylated on tyrosine residues after activation of SRC. In terms of tissue distribution, ubiquitously expressed. Brain expression is restricted to glial cells and fibroblasts. Highest levels in the testis.

The protein resides in the cytoplasm. It is found in the cytoskeleton. Its subcellular location is the cytoplasmic vesicle. It localises to the clathrin-coated vesicle. The protein localises to the cell projection. The protein resides in the uropodium. It is found in the endosome. Its subcellular location is the microtubule organizing center. It localises to the centrosome. The protein localises to the centriole. The protein resides in the recycling endosome. It is found in the phagocytic cup. Its subcellular location is the phagosome membrane. It localises to the podosome. The protein localises to the cell junction. The protein resides in the postsynaptic density. It is found in the synapse. Its subcellular location is the synaptosome. It localises to the midbody. The protein localises to the membrane. The protein resides in the clathrin-coated pit. It is found in the cell membrane. The catalysed reaction is GTP + H2O = GDP + phosphate + H(+). Functionally, catalyzes the hydrolysis of GTP and utilizes this energy to mediate vesicle scission at plasma membrane during endocytosis and filament remodeling at many actin structures during organization of the actin cytoskeleton. Plays an important role in vesicular trafficking processes, namely clathrin-mediated endocytosis (CME), exocytic and clathrin-coated vesicle from the trans-Golgi network, and PDGF stimulated macropinocytosis. During vesicular trafficking process, associates to the membrane, through lipid binding, and self-assembles into ring-like structure through oligomerization to form a helical polymer around the vesicle membrane and leading to vesicle scission. Plays a role in organization of the actin cytoskeleton by mediating arrangement of stress fibers and actin bundles in podocytes. During organization of the actin cytoskeleton, self-assembles into ring-like structure that directly bundles actin filaments to form typical membrane tubules decorated with dynamin spiral polymers. Self-assembly increases GTPase activity and the GTP hydrolysis causes the rapid depolymerization of dynamin spiral polymers, and results in dispersion of actin bundles. Remodels, through its interaction with CTTN, bundled actin filaments in a GTPase-dependent manner and plays a role in orchestrating the global actomyosin cytoskeleton. The interaction with CTTN stabilizes the interaction of DNM2 and actin filaments and stimulates the intrinsic GTPase activity that results in actin filament-barbed ends and increases the sensitivity of filaments in bundles to the actin depolymerizing factor, CFL1. Plays a role in the autophagy process, by participating in the formation of ATG9A vesicles destined for the autophagosomes through its interaction with SNX18, by mediating recycling endosome scission leading to autophagosome release through MAP1LC3B interaction and by regulating maturation of apoptotic cell corpse-containing phagosomes by recruiting PIK3C3 to the phagosome membrane. Also plays a role in cytokinesis. May participate in centrosome cohesion through its interaction with TUBG1. Plays a role in the regulation of neuron morphology, axon growth and formation of neuronal growth cones. Involved in membrane tubulation. The chain is Dynamin-2 from Rattus norvegicus (Rat).